A 362-amino-acid polypeptide reads, in one-letter code: Glutamate 5-kinase (362 aa).

Lys3 serves as a coordination point for ATP. Residues Ser43, Asp128, and Asn140 each coordinate substrate. ATP-binding positions include Thr160–Asp161 and Thr202–Lys208. The region spanning Ala267–Ser348 is the PUA domain.

It belongs to the glutamate 5-kinase family.

The protein localises to the cytoplasm. The catalysed reaction is L-glutamate + ATP = L-glutamyl 5-phosphate + ADP. It participates in amino-acid biosynthesis; L-proline biosynthesis; L-glutamate 5-semialdehyde from L-glutamate: step 1/2. Catalyzes the transfer of a phosphate group to glutamate to form L-glutamate 5-phosphate. This is Glutamate 5-kinase from Xanthomonas oryzae pv. oryzae (strain KACC10331 / KXO85).